A 175-amino-acid polypeptide reads, in one-letter code: Large ribosomal subunit protein uL10 (175 aa).

The protein belongs to the universal ribosomal protein uL10 family. Part of the ribosomal stalk of the 50S ribosomal subunit. The N-terminus interacts with L11 and the large rRNA to form the base of the stalk. The C-terminus forms an elongated spine to which L12 dimers bind in a sequential fashion forming a multimeric L10(L12)X complex.

Functionally, forms part of the ribosomal stalk, playing a central role in the interaction of the ribosome with GTP-bound translation factors. The protein is Large ribosomal subunit protein uL10 of Synechococcus sp. (strain WH7803).